The chain runs to 114 residues: DNA-directed RNA polymerase subunit Rpo4 (114 aa).

The protein belongs to the eukaryotic RPB4 RNA polymerase subunit family. Part of the 13-subunit RNA polymerase complex. Forms a stalk with Rpo7 that extends from the main structure. In purified enzyme appears as 5 forms, each differing by about 200 Da of a covalently bound, negatively charged residue. Not glycosylated.

The protein resides in the cytoplasm. It catalyses the reaction RNA(n) + a ribonucleoside 5'-triphosphate = RNA(n+1) + diphosphate. In terms of biological role, DNA-dependent RNA polymerase catalyzes the transcription of DNA into RNA using the four ribonucleoside triphosphates as substrates. This subunit is less well bound than the others. Probably not involved in transcription initiation. The polypeptide is DNA-directed RNA polymerase subunit Rpo4 (Sulfolobus acidocaldarius (strain ATCC 33909 / DSM 639 / JCM 8929 / NBRC 15157 / NCIMB 11770)).